Consider the following 882-residue polypeptide: Translation initiation factor IF-2 (882 aa).

2 disordered regions span residues proline 95–leucine 176 and glutamate 229–glutamine 289. Positions threonine 116–serine 133 are enriched in polar residues. Basic and acidic residues-rich tracts occupy residues lysine 137–glutamate 172 and glutamate 229–arginine 246. The span at arginine 247 to asparagine 262 shows a compositional bias: basic residues. The span at lysine 263 to alanine 276 shows a compositional bias: basic and acidic residues. Residues histidine 382–lysine 551 enclose the tr-type G domain. Residues glycine 391 to threonine 398 form a G1 region. Position 391-398 (glycine 391–threonine 398) interacts with GTP. The interval glycine 416–histidine 420 is G2. Residues aspartate 437 to glycine 440 form a G3 region. GTP-binding positions include aspartate 437–histidine 441 and asparagine 491–aspartate 494. The tract at residues asparagine 491–aspartate 494 is G4. The tract at residues serine 527–lysine 529 is G5.

The protein belongs to the TRAFAC class translation factor GTPase superfamily. Classic translation factor GTPase family. IF-2 subfamily.

It localises to the cytoplasm. Its function is as follows. One of the essential components for the initiation of protein synthesis. Protects formylmethionyl-tRNA from spontaneous hydrolysis and promotes its binding to the 30S ribosomal subunits. Also involved in the hydrolysis of GTP during the formation of the 70S ribosomal complex. This chain is Translation initiation factor IF-2, found in Hamiltonella defensa subsp. Acyrthosiphon pisum (strain 5AT).